A 242-amino-acid chain; its full sequence is ATP-dependent dethiobiotin synthetase BioD 1 (242 aa).

12-17 (NVGKTT) contacts ATP. Thr16 contributes to the Mg(2+) binding site. Lys37 is a catalytic residue. Asp66 provides a ligand contact to ATP. The Mg(2+) site is built by Asp66 and Glu124. ATP-binding positions include 184 to 185 (NR), 213 to 215 (PYL), and Glu220.

This sequence belongs to the dethiobiotin synthetase family. As to quaternary structure, homodimer. The cofactor is Mg(2+).

Its subcellular location is the cytoplasm. It carries out the reaction (7R,8S)-7,8-diammoniononanoate + CO2 + ATP = (4R,5S)-dethiobiotin + ADP + phosphate + 3 H(+). It participates in cofactor biosynthesis; biotin biosynthesis; biotin from 7,8-diaminononanoate: step 1/2. In terms of biological role, catalyzes a mechanistically unusual reaction, the ATP-dependent insertion of CO2 between the N7 and N8 nitrogen atoms of 7,8-diaminopelargonic acid (DAPA, also called 7,8-diammoniononanoate) to form a ureido ring. The protein is ATP-dependent dethiobiotin synthetase BioD 1 of Haemophilus influenzae (strain ATCC 51907 / DSM 11121 / KW20 / Rd).